Reading from the N-terminus, the 193-residue chain is nitroreductase FRM2 (193 aa).

This sequence belongs to the nitroreductase family. FMN is required as a cofactor.

Its subcellular location is the cytoplasm. It is found in the nucleus. It catalyses the reaction 4-(hydroxyamino)quinoline N-oxide + 2 NAD(+) + H2O = 4-nitroquinoline N-oxide + 2 NADH + 2 H(+). Type II nitroreductase, able to reduce 4-nitroquinoline N-oxide (4-NQO) into 4-aminoquinoline-N-oxide (4-AQO) via 4-hydroxyaminoquinoline (4-HAQO), using NADH as reductant. involved in the oxidative stress response. Plays a possible role in the metal stress response. Involved in negative regulation of fatty acid metabolism. This is nitroreductase FRM2 from Saccharomyces cerevisiae (strain ATCC 204508 / S288c) (Baker's yeast).